The chain runs to 223 residues: UPF0441 protein YgiB (223 aa).

Residues 178–195 (TVPKTAMAPKPATTTTVT) show a composition bias toward low complexity. The disordered stretch occupies residues 178 to 223 (TVPKTAMAPKPATTTTVTRGGFGESVAKQSTMQRSAAGTSTRSMGG). Polar residues predominate over residues 204–223 (AKQSTMQRSAAGTSTRSMGG).

This sequence belongs to the UPF0441 family.

The protein is UPF0441 protein YgiB of Salmonella heidelberg (strain SL476).